A 310-amino-acid polypeptide reads, in one-letter code: Porphobilinogen deaminase (310 aa).

C242 is subject to S-(dipyrrolylmethanemethyl)cysteine.

This sequence belongs to the HMBS family. Monomer. Dipyrromethane serves as cofactor.

The catalysed reaction is 4 porphobilinogen + H2O = hydroxymethylbilane + 4 NH4(+). It participates in porphyrin-containing compound metabolism; protoporphyrin-IX biosynthesis; coproporphyrinogen-III from 5-aminolevulinate: step 2/4. In terms of biological role, tetrapolymerization of the monopyrrole PBG into the hydroxymethylbilane pre-uroporphyrinogen in several discrete steps. The sequence is that of Porphobilinogen deaminase from Psychromonas ingrahamii (strain DSM 17664 / CCUG 51855 / 37).